The sequence spans 729 residues: Fatty acid oxidation complex subunit alpha (729 aa).

Residues 1–189 form an enoyl-CoA hydratase/isomerase region; sequence MLYKGDTLYL…KIGLVDGVVK (189 aa). Residue Asp-296 coordinates substrate. The segment at 311–729 is 3-hydroxyacyl-CoA dehydrogenase; that stretch reads ETPKQAAVLG…ARPVGDLKTA (419 aa). NAD(+) contacts are provided by residues Met-324, Asp-343, 400–402, Lys-407, and Ser-429; that span reads VVE. His-450 acts as the For 3-hydroxyacyl-CoA dehydrogenase activity in catalysis. An NAD(+)-binding site is contributed by Asn-453. Residues Asn-500 and Tyr-660 each coordinate substrate. A disordered region spans residues 708-729; the sequence is RHNEPYYPPVEPARPVGDLKTA.

In the N-terminal section; belongs to the enoyl-CoA hydratase/isomerase family. The protein in the C-terminal section; belongs to the 3-hydroxyacyl-CoA dehydrogenase family. As to quaternary structure, heterotetramer of two alpha chains (FadB) and two beta chains (FadA).

It catalyses the reaction a (3S)-3-hydroxyacyl-CoA + NAD(+) = a 3-oxoacyl-CoA + NADH + H(+). The enzyme catalyses a (3S)-3-hydroxyacyl-CoA = a (2E)-enoyl-CoA + H2O. The catalysed reaction is a 4-saturated-(3S)-3-hydroxyacyl-CoA = a (3E)-enoyl-CoA + H2O. It carries out the reaction (3S)-3-hydroxybutanoyl-CoA = (3R)-3-hydroxybutanoyl-CoA. It catalyses the reaction a (3Z)-enoyl-CoA = a 4-saturated (2E)-enoyl-CoA. The enzyme catalyses a (3E)-enoyl-CoA = a 4-saturated (2E)-enoyl-CoA. Its pathway is lipid metabolism; fatty acid beta-oxidation. Its function is as follows. Involved in the aerobic and anaerobic degradation of long-chain fatty acids via beta-oxidation cycle. Catalyzes the formation of 3-oxoacyl-CoA from enoyl-CoA via L-3-hydroxyacyl-CoA. It can also use D-3-hydroxyacyl-CoA and cis-3-enoyl-CoA as substrate. The chain is Fatty acid oxidation complex subunit alpha from Citrobacter koseri (strain ATCC BAA-895 / CDC 4225-83 / SGSC4696).